A 1750-amino-acid polypeptide reads, in one-letter code: Brefeldin A-inhibited guanine nucleotide-exchange protein 3 (1750 aa).

A2 is modified (N-acetylalanine). Disordered stretches follow at residues 44–65 (LRSP…IPGP) and 565–596 (EEGS…SSGN). Residues 47–61 (PENSSPVADSESGSS) are compositionally biased toward polar residues. The segment covering 565–588 (EEGSHPVENGKGDGGHGGFERSDS) has biased composition (basic and acidic residues). S586 is modified (phosphoserine). Positions 601 to 788 (AIEQRRAYKL…RALYERISRN (188 aa)) constitute an SEC7 domain. E703 is an active-site residue. The residue at position 1307 (S1307) is a Phosphoserine.

As to quaternary structure, homodimer.

The protein resides in the cytoplasm. It localises to the cytosol. The protein localises to the membrane. With respect to regulation, inhibited by brefeldin A. In terms of biological role, activates the ARF proteins by exchanging bound GDP for free GTP. Plays a role in vesicular protein sorting. Involved both in the nuclear division phase and in the nuclear fusion phase. The protein is Brefeldin A-inhibited guanine nucleotide-exchange protein 3 (BIG3) of Arabidopsis thaliana (Mouse-ear cress).